Here is a 451-residue protein sequence, read N- to C-terminus: MGKYFGTSGIREVVNEKLTPELALKVGLALGTYLNGGRVVIGNDTRTSSEMLKKAVISGLLASGVDVIDIGLAPTPLVGFAIKLYDADAGVTITASHNPPEYNGIKVWDRNGMAYTPEKERELERIIEEEKFKRAPWNEIGQLKQANPREEYIEAIMKEIKLDNSYTVVIDPGNGAGSIISPYLHRELGNRVITINSDPHGFFVRELEPNKESLSMLAKTVKALKADIGIAHDGDADRVGVVDENGEFVEYEVMLSLIAGYMLRKYGKGKVVTTVDAGFALDDYVRGLGGEVVRTRVGDVAVAEELMKHGGVFGGEPSGTWIMPQWNLTPDGIFAGALVLEMIDRLGLIGELAKEVPRYVTLRKKIPCPNDLKAKAMEEIAKLIPREFSYEREITIDGIRIENDDWWILFRPSGTEPIMRITLEAHTKERAESLMEKAEKLVKDAIKKASS.

The active-site Phosphoserine intermediate is S96. Positions 96, 233, 235, and 237 each coordinate Mg(2+). A Phosphoserine modification is found at S96.

The protein belongs to the phosphohexose mutase family. Mg(2+) serves as cofactor. Activated by phosphorylation.

The catalysed reaction is alpha-D-glucosamine 1-phosphate = D-glucosamine 6-phosphate. Catalyzes the conversion of glucosamine-6-phosphate to glucosamine-1-phosphate. This chain is Probable phosphoglucosamine mutase, found in Pyrococcus abyssi (strain GE5 / Orsay).